The chain runs to 275 residues: Methylesterase 10 (275 aa).

The active-site Acyl-ester intermediate is serine 96. Active-site charge relay system residues include aspartate 225 and histidine 253.

This sequence belongs to the AB hydrolase superfamily. Methylesterase family.

It carries out the reaction methyl (-)-jasmonate + H2O = jasmonate + methanol + H(+). Its pathway is plant hormone biosynthesis. It functions in the pathway lipid metabolism; oxylipin biosynthesis. Functionally, methylesterase shown to have methyl jasmonate (MeJA) esterase activity in vitro. The polypeptide is Methylesterase 10 (Arabidopsis thaliana (Mouse-ear cress)).